Consider the following 164-residue polypeptide: Phosphatidyl-N-methylethanolamine N-methyltransferase (164 aa).

The segment at residues 1–21 is an intramembrane region (helical); that stretch reads MGLLAAIGVLLPFPFYWWLWT. Over 22 to 30 the chain is Lumenal; it reads NAQSWVNLC. A helical membrane pass occupies residues 31-52; that stretch reads GRERDPSTVMARVSHVLKAAQL. Residues 53–69 lie on the Cytoplasmic side of the membrane; the sequence is LSLFSVASLSWPPPLYF. Residues 70–90 form a helical membrane-spanning segment; that stretch reads WPLMAFGQFLNFRVYQLLGEA. 74-76 is a binding site for S-adenosyl-L-methionine; the sequence is AFG. The Lumenal portion of the chain corresponds to 91–131; sequence GTYYGVRFGKNIPWVTEFPFGVIRDPQYVGSIMSLLACLSW. The helical transmembrane segment at 132 to 151 threads the bilayer; the sequence is VPFQYILLWSLGYVFMMFLE. The Cytoplasmic segment spans residues 152–164; the sequence is SKEDPNARAKSIS. Residue 154-155 participates in S-adenosyl-L-methionine binding; that stretch reads ED.

Belongs to the class VI-like SAM-binding methyltransferase superfamily. PEMT/PEM2 methyltransferase family.

The protein resides in the endoplasmic reticulum membrane. It carries out the reaction a 1,2-diacyl-sn-glycero-3-phospho-N-methylethanolamine + S-adenosyl-L-methionine = a 1,2-diacyl-sn-glycero-3-phospho-N,N-dimethylethanolamine + S-adenosyl-L-homocysteine + H(+). The catalysed reaction is a 1,2-diacyl-sn-glycero-3-phospho-N,N-dimethylethanolamine + S-adenosyl-L-methionine = a 1,2-diacyl-sn-glycero-3-phosphocholine + S-adenosyl-L-homocysteine + H(+). It participates in phospholipid metabolism; phosphatidylcholine biosynthesis. Its function is as follows. Catalyzes the second two steps of the methylation pathway of phosphatidylcholine biosynthesis, the SAM-dependent methylation of phosphatidylmonomethylethanolamine (PMME) to phosphatidyldimethylethanolamine (PDME) and of PDME to phosphatidylcholine (PC). The protein is Phosphatidyl-N-methylethanolamine N-methyltransferase (PLMT) of Arabidopsis thaliana (Mouse-ear cress).